Consider the following 322-residue polypeptide: uncharacterized protein (322 aa).

Composition is skewed to basic residues over residues Met-1–Thr-16 and Leu-43–Val-61. Residues Met-1 to Thr-69 are disordered. S-adenosyl-L-methionine-binding residues include Gly-261, Ile-281, and Leu-290.

It belongs to the class IV-like SAM-binding methyltransferase superfamily. RNA methyltransferase TrmH family.

This is an uncharacterized protein from Mycobacterium bovis (strain BCG / Pasteur 1173P2).